Here is a 544-residue protein sequence, read N- to C-terminus: Chaperonin GroEL (544 aa).

Residues 30–33 (TLGP), lysine 51, 87–91 (DGTTT), glycine 415, 481–483 (DAL), and aspartate 497 contribute to the ATP site.

This sequence belongs to the chaperonin (HSP60) family. As to quaternary structure, forms a cylinder of 14 subunits composed of two heptameric rings stacked back-to-back. Interacts with the co-chaperonin GroES.

Its subcellular location is the cytoplasm. The enzyme catalyses ATP + H2O + a folded polypeptide = ADP + phosphate + an unfolded polypeptide.. Its function is as follows. Together with its co-chaperonin GroES, plays an essential role in assisting protein folding. The GroEL-GroES system forms a nano-cage that allows encapsulation of the non-native substrate proteins and provides a physical environment optimized to promote and accelerate protein folding. This Chlamydia muridarum (strain MoPn / Nigg) protein is Chaperonin GroEL.